The following is a 115-amino-acid chain: DNA-binding protein PYRAB09250 (115 aa).

Belongs to the PDCD5 family.

In Pyrococcus abyssi (strain GE5 / Orsay), this protein is DNA-binding protein PYRAB09250.